The primary structure comprises 476 residues: Arginine biosynthesis bifunctional protein ArgJ, mitochondrial (476 aa).

6 residues coordinate substrate: Thr-204, Lys-233, Thr-244, Glu-331, Asn-471, and Thr-476. Thr-244 (nucleophile) is an active-site residue.

Belongs to the ArgJ family. In terms of assembly, heterodimer of an alpha and a beta chain. The alpha and beta chains are autoproteolytically processed from a single precursor protein within the mitochondrion.

Its subcellular location is the mitochondrion matrix. It catalyses the reaction N(2)-acetyl-L-ornithine + L-glutamate = N-acetyl-L-glutamate + L-ornithine. The catalysed reaction is L-glutamate + acetyl-CoA = N-acetyl-L-glutamate + CoA + H(+). The protein operates within amino-acid biosynthesis; L-arginine biosynthesis; L-ornithine and N-acetyl-L-glutamate from L-glutamate and N(2)-acetyl-L-ornithine (cyclic): step 1/1. It functions in the pathway amino-acid biosynthesis; L-arginine biosynthesis; N(2)-acetyl-L-ornithine from L-glutamate: step 1/4. In terms of biological role, catalyzes two activities which are involved in the cyclic version of arginine biosynthesis: the synthesis of acetylglutamate from glutamate and acetyl-CoA, and of ornithine by transacetylation between acetylornithine and glutamate. This is Arginine biosynthesis bifunctional protein ArgJ, mitochondrial from Arthroderma otae (strain ATCC MYA-4605 / CBS 113480) (Microsporum canis).